Here is a 511-residue protein sequence, read N- to C-terminus: 2-isopropylmalate synthase (511 aa).

The Pyruvate carboxyltransferase domain occupies 6–269 (IIIFDTTLRD…YTDIKCENIF (264 aa)). Residues Asp15, His203, His205, and Asn239 each contribute to the Mn(2+) site. The interval 394-511 (ILEKLSVISG…SLKVEERKMA (118 aa)) is regulatory domain.

It belongs to the alpha-IPM synthase/homocitrate synthase family. LeuA type 1 subfamily. In terms of assembly, homodimer. It depends on Mn(2+) as a cofactor.

The protein resides in the cytoplasm. The catalysed reaction is 3-methyl-2-oxobutanoate + acetyl-CoA + H2O = (2S)-2-isopropylmalate + CoA + H(+). It functions in the pathway amino-acid biosynthesis; L-leucine biosynthesis; L-leucine from 3-methyl-2-oxobutanoate: step 1/4. Its function is as follows. Catalyzes the condensation of the acetyl group of acetyl-CoA with 3-methyl-2-oxobutanoate (2-ketoisovalerate) to form 3-carboxy-3-hydroxy-4-methylpentanoate (2-isopropylmalate). This chain is 2-isopropylmalate synthase, found in Campylobacter jejuni subsp. jejuni serotype O:6 (strain 81116 / NCTC 11828).